Reading from the N-terminus, the 167-residue chain is Nucleoside diphosphate kinase (167 aa).

Positions 11, 92, 98, 109, and 129 each coordinate ATP. H132 (pros-phosphohistidine intermediate) is an active-site residue.

The protein belongs to the NDK family. In terms of assembly, homotetramer. The cofactor is Mg(2+).

The protein localises to the cytoplasm. It catalyses the reaction a 2'-deoxyribonucleoside 5'-diphosphate + ATP = a 2'-deoxyribonucleoside 5'-triphosphate + ADP. The catalysed reaction is a ribonucleoside 5'-diphosphate + ATP = a ribonucleoside 5'-triphosphate + ADP. Its function is as follows. Major role in the synthesis of nucleoside triphosphates other than ATP. The ATP gamma phosphate is transferred to the NDP beta phosphate via a ping-pong mechanism, using a phosphorylated active-site intermediate. This chain is Nucleoside diphosphate kinase (ndk), found in Borreliella burgdorferi (strain ATCC 35210 / DSM 4680 / CIP 102532 / B31) (Borrelia burgdorferi).